The chain runs to 81 residues: Delta-conotoxin PVIA (81 aa).

The N-terminal stretch at 1 to 22 (MKLTCVMIVAVLFLTAWTFVTA) is a signal peptide. The propeptide occupies 23–49 (DDSKNGLENHFWKARDEMKNREASKLD). 3 disulfides stabilise this stretch: C54-C69, C61-C73, and C68-C78. Residues P57 and P65 each carry the 4-hydroxyproline modification. G80 carries the post-translational modification Glycine amide; in form delta-conotoxin PVIA.

The difference between delta-conotoxin PVIA and [deamido]-delta-conotoxin PVIA lies in the state of amidation of Gly-80. As to expression, expressed by the venom duct.

It is found in the secreted. Its function is as follows. Delta-conotoxins bind to site 6 of voltage-gated sodium channels (Nav) and inhibit the inactivation process. This toxin shows weak effects on rNav1.2/SCN2A (EC(50)=2.9 uM), rNav1.4/SCN4A (EC(50)=5.2 uM), hNav1.7/SCN9A (EC(50)=1.9 uM) and rNav1.7/SCN9A (EC(50)=6.4 uM). In vivo, this toxin shows different effects. In mice, injection of this toxin causes hyperactivity, rapid running, limb extension, and death. In fish, the peptide elicites spurts of rapid swimming, with twisted motions, quivering fins and the lockjaw extended mouth syndrome. Rigid paralysis and death are observed at higher doses. In mollusks, this peptide is inactive. Injection of this peptide together with the kappa-conotoxin PVIIA causes the sudden tetanus of prey (STOP) syndrome, which is a single, lethal 'fin-pop' in envenomed fish. The polypeptide is Delta-conotoxin PVIA (Conus purpurascens (Purple cone)).